Consider the following 237-residue polypeptide: Lipoprotein-releasing system ATP-binding protein LolD (237 aa).

Positions 8–236 (ISVTDLRKTF…EAIKKSVKTA (229 aa)) constitute an ABC transporter domain. 40-47 (GKSGSGKS) lines the ATP pocket.

The protein belongs to the ABC transporter superfamily. Lipoprotein translocase (TC 3.A.1.125) family. In terms of assembly, the complex is composed of two ATP-binding proteins (LolD) and two transmembrane proteins (LolC and LolE).

The protein resides in the cell inner membrane. Its function is as follows. Part of the ABC transporter complex LolCDE involved in the translocation of mature outer membrane-directed lipoproteins, from the inner membrane to the periplasmic chaperone, LolA. Responsible for the formation of the LolA-lipoprotein complex in an ATP-dependent manner. This is Lipoprotein-releasing system ATP-binding protein LolD from Leptospira interrogans serogroup Icterohaemorrhagiae serovar Lai (strain 56601).